The chain runs to 349 residues: Isopentenyl-diphosphate delta-isomerase (349 aa).

Residue 6-7 (RK) coordinates substrate. FMN-binding positions include 62 to 64 (AMT), S93, and N122. Q152 provides a ligand contact to substrate. Residue E153 coordinates Mg(2+). FMN contacts are provided by residues K184, T214, 258-259 (GG), and 280-281 (AG).

Belongs to the IPP isomerase type 2 family. As to quaternary structure, homooctamer. Dimer of tetramers. FMN is required as a cofactor. It depends on NADPH as a cofactor. The cofactor is Mg(2+).

The protein localises to the cytoplasm. It carries out the reaction isopentenyl diphosphate = dimethylallyl diphosphate. Functionally, involved in the biosynthesis of isoprenoids. Catalyzes the 1,3-allylic rearrangement of the homoallylic substrate isopentenyl (IPP) to its allylic isomer, dimethylallyl diphosphate (DMAPP). The sequence is that of Isopentenyl-diphosphate delta-isomerase from Bacillus cereus (strain ATCC 10987 / NRS 248).